A 258-amino-acid polypeptide reads, in one-letter code: Ribosomal RNA small subunit methyltransferase A (258 aa).

Histidine 13, leucine 15, glycine 40, glutamate 62, aspartate 87, and asparagine 108 together coordinate S-adenosyl-L-methionine.

It belongs to the class I-like SAM-binding methyltransferase superfamily. rRNA adenine N(6)-methyltransferase family. RsmA subfamily.

It localises to the cytoplasm. It carries out the reaction adenosine(1518)/adenosine(1519) in 16S rRNA + 4 S-adenosyl-L-methionine = N(6)-dimethyladenosine(1518)/N(6)-dimethyladenosine(1519) in 16S rRNA + 4 S-adenosyl-L-homocysteine + 4 H(+). Specifically dimethylates two adjacent adenosines (A1518 and A1519) in the loop of a conserved hairpin near the 3'-end of 16S rRNA in the 30S particle. May play a critical role in biogenesis of 30S subunits. This Sulfurihydrogenibium sp. (strain YO3AOP1) protein is Ribosomal RNA small subunit methyltransferase A.